A 675-amino-acid chain; its full sequence is Potassium-transporting ATPase ATP-binding subunit (675 aa).

Helical transmembrane passes span 34 to 54, 65 to 85, 216 to 236, and 245 to 265; these read IMFVVEVGMILTLILICFPDI, LITIFIILLITILFANFSEAF, IALFTLLTTLTIIFLVVIVTL, and LILPIAMLIALTVCLIPTTIG. The active-site 4-aspartylphosphate intermediate is the aspartate 304. Residues aspartate 341, glutamate 345, 372–379, and lysine 390 contribute to the ATP site; that span reads FTAETRMS. Aspartate 513 and aspartate 517 together coordinate Mg(2+). The next 3 helical transmembrane spans lie at 569–591, 611–631, and 644–664; these read ALTTFSLANDVAKYFAILPALMM, AIISALIFNALIIVALIPIAM, and IFINNMLIYGLGGLIVPFLGI.

It belongs to the cation transport ATPase (P-type) (TC 3.A.3) family. Type IA subfamily. In terms of assembly, the system is composed of three essential subunits: KdpA, KdpB and KdpC.

It is found in the cell membrane. It carries out the reaction K(+)(out) + ATP + H2O = K(+)(in) + ADP + phosphate + H(+). Its function is as follows. Part of the high-affinity ATP-driven potassium transport (or Kdp) system, which catalyzes the hydrolysis of ATP coupled with the electrogenic transport of potassium into the cytoplasm. This subunit is responsible for energy coupling to the transport system and for the release of the potassium ions to the cytoplasm. The sequence is that of Potassium-transporting ATPase ATP-binding subunit from Staphylococcus aureus (strain MSSA476).